We begin with the raw amino-acid sequence, 129 residues long: Small ribosomal subunit protein uS9 (129 aa).

Residues 110–129 (VERKKYGKKKARKSFQFSKR) form a disordered region. The segment covering 114–129 (KYGKKKARKSFQFSKR) has biased composition (basic residues).

This sequence belongs to the universal ribosomal protein uS9 family.

This is Small ribosomal subunit protein uS9 from Chlorobaculum parvum (strain DSM 263 / NCIMB 8327) (Chlorobium vibrioforme subsp. thiosulfatophilum).